The following is a 225-amino-acid chain: Enolase-phosphatase E1 (225 aa).

Belongs to the HAD-like hydrolase superfamily. MasA/MtnC family. As to quaternary structure, monomer. Mg(2+) is required as a cofactor.

It carries out the reaction 5-methylsulfanyl-2,3-dioxopentyl phosphate + H2O = 1,2-dihydroxy-5-(methylsulfanyl)pent-1-en-3-one + phosphate. It functions in the pathway amino-acid biosynthesis; L-methionine biosynthesis via salvage pathway; L-methionine from S-methyl-5-thio-alpha-D-ribose 1-phosphate: step 3/6. The protein operates within amino-acid biosynthesis; L-methionine biosynthesis via salvage pathway; L-methionine from S-methyl-5-thio-alpha-D-ribose 1-phosphate: step 4/6. Bifunctional enzyme that catalyzes the enolization of 2,3-diketo-5-methylthiopentyl-1-phosphate (DK-MTP-1-P) into the intermediate 2-hydroxy-3-keto-5-methylthiopentenyl-1-phosphate (HK-MTPenyl-1-P), which is then dephosphorylated to form the acireductone 1,2-dihydroxy-3-keto-5-methylthiopentene (DHK-MTPene). The polypeptide is Enolase-phosphatase E1 (Pseudomonas aeruginosa (strain LESB58)).